A 658-amino-acid chain; its full sequence is NUAK family SNF1-like kinase 1 (658 aa).

Met1 is modified (N-acetylmethionine). Positions 1–53 are disordered; it reads MEGAAVSAAGDGPAVETGLPGSPLEAVAGATAAPVEPRKPHGVKRHHHKHNLK. Position 22 is a phosphoserine (Ser22). Residues 40–53 are compositionally biased toward basic residues; it reads PHGVKRHHHKHNLK. Residues 56–307 form the Protein kinase domain; that stretch reads YELQETLGKG…IEDIANHWWV (252 aa). Residues 62-70 and Lys85 each bind ATP; that span reads LGKGTYGKV. Asp179 (proton acceptor) is an active-site residue. Residue Thr212 is modified to Phosphothreonine; by LKB1. Disordered stretches follow at residues 353–422 and 441–568; these read LAKP…EGIV and IPLP…SYSR. A compositionally biased stretch (polar residues) spans 378–393; the sequence is FPQSGQDSVPESPSKL. Residues 394 to 405 are compositionally biased toward basic residues; the sequence is SSKRPKGILKKR. A GILK motif motif is present at residues 400 to 403; sequence GILK. A Phosphoserine modification is found at Ser456. Residues 519 to 530 are compositionally biased toward basic residues; it reads SCRRKGILKHSS. Low complexity predominate over residues 559-568; it reads SDGISRSYSR. At Ser601 the chain carries Phosphoserine; by PKB/AKT1.

Belongs to the protein kinase superfamily. CAMK Ser/Thr protein kinase family. SNF1 subfamily. Interacts (via GILK motif) with PPP1CB; the interaction is direct and bridges NUAK1 and PPP1R12A. Interacts with CDKN1A. It depends on Mg(2+) as a cofactor. Post-translationally, phosphorylated at Thr-212 by STK11/LKB1 in complex with STE20-related adapter-alpha (STRADA) pseudo kinase and CAB39. Not dephosphorylated by the myosin PP1 complex when regulating its activity, due to the presence of PPP1R12A, which prevents myosin PP1 from dephosphorylating NUAK1. Phosphorylated by STK38L upon stimulation with IGF1. Ubiquitinated with 'Lys-29'- and 'Lys-33'-linked polyubiquitins which appear to impede LKB1-mediated phosphorylation. Deubiquitinated by USP9X. Expressed in the developing central nervous system, in epidermis, and some other tissues.

Its subcellular location is the nucleus. It localises to the cytoplasm. It carries out the reaction L-seryl-[protein] + ATP = O-phospho-L-seryl-[protein] + ADP + H(+). The catalysed reaction is L-threonyl-[protein] + ATP = O-phospho-L-threonyl-[protein] + ADP + H(+). Its activity is regulated as follows. Activated by phosphorylation on Thr-212. Activated by phosphorylation at Ser-601 AKT1 during glucose starvation; the relevance of such activation in normal cells is however unsure. Its function is as follows. Serine/threonine-protein kinase involved in various processes such as cell adhesion, regulation of cell ploidy and senescence, cell proliferation and tumor progression. Phosphorylates ATM, CASP6, LATS1, PPP1R12A and p53/TP53. Acts as a regulator of cellular senescence and cellular ploidy by mediating phosphorylation of 'Ser-464' of LATS1, thereby controlling its stability. Controls cell adhesion by regulating activity of the myosin protein phosphatase 1 (PP1) complex. Acts by mediating phosphorylation of PPP1R12A subunit of myosin PP1: phosphorylated PPP1R12A then interacts with 14-3-3, leading to reduced dephosphorylation of myosin MLC2 by myosin PP1. May be involved in DNA damage response: phosphorylates p53/TP53 at 'Ser-15' and 'Ser-392' and is recruited to the CDKN1A/WAF1 promoter to participate in transcription activation by p53/TP53. May also act as a tumor malignancy-associated factor by promoting tumor invasion and metastasis under regulation and phosphorylation by AKT1. Suppresses Fas-induced apoptosis by mediating phosphorylation of CASP6, thereby suppressing the activation of the caspase and the subsequent cleavage of CFLAR. Regulates UV radiation-induced DNA damage response mediated by CDKN1A. In association with STK11, phosphorylates CDKN1A in response to UV radiation and contributes to its degradation which is necessary for optimal DNA repair. In Mus musculus (Mouse), this protein is NUAK family SNF1-like kinase 1 (Nuak1).